We begin with the raw amino-acid sequence, 425 residues long: Adenylosuccinate synthetase (425 aa).

GTP is bound by residues 12–18 and 40–42; these read GDEGKGK and GHT. Residue Asp-13 is the Proton acceptor of the active site. Residues Asp-13 and Gly-40 each contribute to the Mg(2+) site. Residues 13–16, 38–41, Thr-130, Arg-144, Gln-224, Thr-239, and Arg-301 contribute to the IMP site; these read DEGK and NAGH. His-41 functions as the Proton donor in the catalytic mechanism. 297-303 is a substrate binding site; sequence TVSNRRR. Residues Arg-303, 329-331, and 411-413 each bind GTP; these read KLD and STS.

The protein belongs to the adenylosuccinate synthetase family. In terms of assembly, homodimer. The cofactor is Mg(2+).

The protein localises to the cytoplasm. The catalysed reaction is IMP + L-aspartate + GTP = N(6)-(1,2-dicarboxyethyl)-AMP + GDP + phosphate + 2 H(+). The protein operates within purine metabolism; AMP biosynthesis via de novo pathway; AMP from IMP: step 1/2. Functionally, plays an important role in the de novo pathway of purine nucleotide biosynthesis. Catalyzes the first committed step in the biosynthesis of AMP from IMP. The polypeptide is Adenylosuccinate synthetase (Wolbachia sp. subsp. Drosophila simulans (strain wRi)).